A 225-amino-acid polypeptide reads, in one-letter code: Uracil-DNA glycosylase (225 aa).

Asp65 serves as the catalytic Proton acceptor.

Belongs to the uracil-DNA glycosylase (UDG) superfamily. UNG family.

The protein resides in the cytoplasm. It carries out the reaction Hydrolyzes single-stranded DNA or mismatched double-stranded DNA and polynucleotides, releasing free uracil.. Functionally, excises uracil residues from the DNA which can arise as a result of misincorporation of dUMP residues by DNA polymerase or due to deamination of cytosine. This Clostridium perfringens (strain 13 / Type A) protein is Uracil-DNA glycosylase.